We begin with the raw amino-acid sequence, 928 residues long: BCAS3 microtubule associated cell migration factor (928 aa).

Position 1 is an N-acetylmethionine (M1). The stretch at 69 to 114 (DLNDTSRNLEFHEIHSTGNEPPLLIMIGYSDGMQVWSIPISGEAQE) is one WD repeat. K215 participates in a covalent cross-link: Glycyl lysine isopeptide (Lys-Gly) (interchain with G-Cter in SUMO1); alternate. Residue K215 forms a Glycyl lysine isopeptide (Lys-Gly) (interchain with G-Cter in SUMO2); alternate linkage. Required for recruitment to preautophagosomal structure in response to mitophagy regions lie at residues 254–312 (RGGA…SRRS) and 437–560 (YGGQ…IKAP). 3 positions are modified to phosphoserine: S461, S480, and S488. 2 disordered regions span residues 472-515 (TSKQ…PGNP) and 755-777 (TTVI…PQPL). Composition is skewed to low complexity over residues 480 to 494 (SPVP…GSPL), 505 to 514 (NNFTNNNPGN), and 755 to 771 (TTVI…HGPS). Residues S838, S886, and S898 each carry the phosphoserine modification. Positions 868 to 928 (ESPSRDVVGS…PLSLFPTGFP (61 aa)) are disordered. Positions 887 to 901 (IETLSNSSGSTSGSI) are enriched in low complexity.

It belongs to the BCAS3 family. Interacts with histone H3, ESR1, KAT2B and PELP1; the interactions occur in a estrogen-dependent manner. Interacts with beta-tubulin and VIM. Interacts (via C-terminal) with PHAF1; the interaction is requrired for the association with the phagophore. Expressed in stomach, liver, lung, kidney, prostate, testis, thyroid gland, adrenal gland, brain, heart, skeletal muscle, colon, spleen, small intestine, placenta, blood leukocyte and mammary epithelial cells. Expressed in undifferentiated ES cells. Expressed in blood islands and nascent blood vessels derived from differentiated ES cells into embryoid bodies (BD). Expressed in endothelial cells. Not detected in brain. Expressed in brain tumors (at protein level). Expressed in brain. Highly expressed in breast cancers and in glioma cell lines.

The protein localises to the nucleus. It localises to the cytoplasm. The protein resides in the cytoskeleton. It is found in the preautophagosomal structure. Its function is as follows. Plays a role in angiogenesis. Participates in the regulation of cell polarity and directional endothelial cell migration by mediating both the activation and recruitment of CDC42 and the reorganization of the actin cytoskeleton at the cell leading edge. Promotes filipodia formation. Functions synergistically with PELP1 as a transcriptional coactivator of estrogen receptor-responsive genes. Stimulates histone acetyltransferase activity. Binds to chromatin. Plays a regulatory role in autophagic activity. In complex with PHAF1, associates with the preautophagosomal structure during both non-selective and selective autophagy. Probably binds phosphatidylinositol 3-phosphate (PtdIns3P) which would mediate the recruitment preautophagosomal structures. This Homo sapiens (Human) protein is BCAS3 microtubule associated cell migration factor.